The chain runs to 142 residues: ATP synthase epsilon chain (142 aa).

Belongs to the ATPase epsilon chain family. As to quaternary structure, F-type ATPases have 2 components, CF(1) - the catalytic core - and CF(0) - the membrane proton channel. CF(1) has five subunits: alpha(3), beta(3), gamma(1), delta(1), epsilon(1). CF(0) has three main subunits: a, b and c.

It localises to the cell inner membrane. Its function is as follows. Produces ATP from ADP in the presence of a proton gradient across the membrane. The protein is ATP synthase epsilon chain of Mannheimia succiniciproducens (strain KCTC 0769BP / MBEL55E).